The following is a 114-amino-acid chain: Circadian clock oscillator protein KaiB (114 aa).

It belongs to the KaiB family. May undergo a major conformational rearrangment; in the free state forms homooligomers. When bound to KaiC switches to a monomeric thioredoxin-fold (KaiB(fs)). The active oscillator complex is probably KaiC(6):KaiB(6).

In terms of biological role, component of the KaiBC clock protein complex, which constitutes the main circadian regulator in cyanobacteria; it may modify the ATPase activity of KaiC. Its function is as follows. May be a metamorphic protein which reversibly switches between an inactive tetrameric fold and a rare, thioredoxin-like monomeric fold (KaiB(fs)). KaiB(fs) binds phospho-KaiC, and perhaps clock output effectors. The sequence is that of Circadian clock oscillator protein KaiB from Prochlorococcus marinus (strain MIT 9211).